A 147-amino-acid polypeptide reads, in one-letter code: UPF0306 protein KPN78578_35330 (147 aa).

The protein belongs to the UPF0306 family.

The polypeptide is UPF0306 protein KPN78578_35330 (Klebsiella pneumoniae subsp. pneumoniae (strain ATCC 700721 / MGH 78578)).